Here is a 7214-residue protein sequence, read N- to C-terminus: Nonribosomal peptide synthetase atnA (7214 aa).

The adenylation 1 stretch occupies residues Glu-257–Ile-651. The Carrier 1 domain occupies Glu-786–Ser-862. Residue Ser-823 is modified to O-(pantetheine 4'-phosphoryl)serine. Positions Glu-899–Ile-1318 are condensation 1. Residues Gln-1340–Arg-1735 form an adenylation 2 region. Positions Gln-1877 to Glu-1953 constitute a Carrier 2 domain. Ser-1914 is modified (O-(pantetheine 4'-phosphoryl)serine). The epimerization stretch occupies residues Pro-1962–Glu-2384. Positions Ser-2431–Leu-2845 are condensation 2. The tract at residues Gln-2866–Val-3262 is adenylation 3. Residues Ala-3398 to Tyr-3472 enclose the Carrier 3 domain. Residue Ser-3433 is modified to O-(pantetheine 4'-phosphoryl)serine. Positions Val-3510 to Leu-3904 are condensation 3. Positions Glu-3943–Leu-4339 are adenylation 4. The Carrier 4 domain occupies Val-4476–Ser-4552. Position 4513 is an O-(pantetheine 4'-phosphoryl)serine (Ser-4513). Residues Val-4601–Leu-5033 are condensation 4. Positions Phe-5051–Phe-5446 are adenylation 5. The interval Phe-5489–Ser-5515 is disordered. Positions Ala-5591–Ala-5667 constitute a Carrier 5 domain. Ser-5628 carries the post-translational modification O-(pantetheine 4'-phosphoryl)serine. A condensation 5 region spans residues Gln-5707–Met-6123. Positions Glu-6145 to Arg-6543 are adenylation 6. The Carrier 6 domain maps to Asp-6683–Asn-6766. An O-(pantetheine 4'-phosphoryl)serine modification is found at Ser-6725. The segment at Ile-6814–Gly-7194 is thioesterase (TE) domain. The interval Ser-6895–Glu-6915 is disordered.

The protein belongs to the NRP synthetase family.

The protein operates within secondary metabolite biosynthesis. Nonribosomal peptide synthetase; part of the gene cluster that mediates the biosynthesis of aspercryptins, linear lipopeptides built from six amino acids including 2 highly unusual and nonproteogenic amino acids, 2-amino-octanoic acid (2aoa) and 2-amino-dodecanol (2adol). The core structure of aspercryptins is as follows: Ser/Ala-Thr-Ile/Val-2aoa-Asn-2adol. The first step of aspercryptin biosynthesis is the generation of the fatty acid precursors, octanoic and dodecanoic acids, by the FAS subunits atnF and atnM. The fatty acid precursors are likely transformed into the corresponding alpha-amino fatty acids in three steps. First, they are hydroxylated by the cytochrome P450 monooxygenase atnE, then oxidized to the corresponding alpha-keto acids by the NAD(P)-dependent oxidoreductase atnD, and finally converted to the alpha-amino fatty acids by the PLP-dependent aminotransferases atnH or atnJ. the alpha-amino fatty acids, 2-amino-octanoic and 2-amino-dodecanoic acids, are recognized, activated, and covalently tethered to the NRPS atnA by its fourth and sixth adenylation domains. The second module of atnA is the Thr module and contains an epimerase (E) domain responsible for the epimerization of Thr to D-allo-Thr. Additionally, despite atnA having only one epimerase domain, the first amino acid of aspercryptin A1 is D-Ser, suggesting that serine is either loaded directly as D-Ser on the first module or that the epimerase domain in the threonine module epimerizes both L-Ser and L-Thr. After condensation of the hexapeptide of aspercryptin, the C-terminal reductase (TE) domain might be involved in the reductive release and production of the aldehyde hexapeptide. Further reduction would generate aspercryptins. The variety of aspercryptins produced reflects the flexibility of the atnA NRPS, allowing incorporation of alanine instead of serine, valine for isoleucine, and a C10 fatty amino alcohol instead of the C12 version. AtnB seems to be involved in the selectivity for Ile versus Val by the third module. Moreover, type B, C and D aspercryptins have an additional N-terminal cichorine, acetyl and propionyl group respectively. This chain is Nonribosomal peptide synthetase atnA, found in Emericella nidulans (strain FGSC A4 / ATCC 38163 / CBS 112.46 / NRRL 194 / M139) (Aspergillus nidulans).